The chain runs to 335 residues: F420-dependent glucose-6-phosphate dehydrogenase (335 aa).

D40 contacts coenzyme F420-(gamma-Glu)n. H41 functions as the Proton donor in the catalytic mechanism. Residues T77 and 108-109 (TG) each bind coenzyme F420-(gamma-Glu)n. The Proton acceptor role is filled by E110. Residues N113, 177-178 (GG), and 180-181 (VV) each bind coenzyme F420-(gamma-Glu)n. The substrate site is built by T195, K198, K259, and R283.

The protein belongs to the F420-dependent glucose-6-phosphate dehydrogenase family. In terms of assembly, homodimer.

It carries out the reaction oxidized coenzyme F420-(gamma-L-Glu)(n) + D-glucose 6-phosphate + H(+) = 6-phospho-D-glucono-1,5-lactone + reduced coenzyme F420-(gamma-L-Glu)(n). In terms of biological role, catalyzes the coenzyme F420-dependent oxidation of glucose 6-phosphate (G6P) to 6-phosphogluconolactone. The protein is F420-dependent glucose-6-phosphate dehydrogenase of Segniliparus rotundus (strain ATCC BAA-972 / CDC 1076 / CIP 108378 / DSM 44985 / JCM 13578).